A 273-amino-acid chain; its full sequence is Formamidopyrimidine-DNA glycosylase (273 aa).

Pro2 acts as the Schiff-base intermediate with DNA in catalysis. The Proton donor role is filled by Glu3. The active-site Proton donor; for beta-elimination activity is the Lys58. The DNA site is built by His91 and Arg110. An FPG-type zinc finger spans residues 238–272 (QVYGKTGQPCPRCASMIVKIKLGGRGTHLCPHCQK). The active-site Proton donor; for delta-elimination activity is the Arg262.

The protein belongs to the FPG family. As to quaternary structure, monomer. Zn(2+) is required as a cofactor.

It carries out the reaction Hydrolysis of DNA containing ring-opened 7-methylguanine residues, releasing 2,6-diamino-4-hydroxy-5-(N-methyl)formamidopyrimidine.. The enzyme catalyses 2'-deoxyribonucleotide-(2'-deoxyribose 5'-phosphate)-2'-deoxyribonucleotide-DNA = a 3'-end 2'-deoxyribonucleotide-(2,3-dehydro-2,3-deoxyribose 5'-phosphate)-DNA + a 5'-end 5'-phospho-2'-deoxyribonucleoside-DNA + H(+). Its function is as follows. Involved in base excision repair of DNA damaged by oxidation or by mutagenic agents. Acts as a DNA glycosylase that recognizes and removes damaged bases. Has a preference for oxidized purines, such as 7,8-dihydro-8-oxoguanine (8-oxoG). Has AP (apurinic/apyrimidinic) lyase activity and introduces nicks in the DNA strand. Cleaves the DNA backbone by beta-delta elimination to generate a single-strand break at the site of the removed base with both 3'- and 5'-phosphates. The protein is Formamidopyrimidine-DNA glycosylase of Streptococcus thermophilus (strain ATCC BAA-250 / LMG 18311).